The following is a 185-amino-acid chain: UPF0669 protein C6orf120 homolog (185 aa).

The N-terminal stretch at 1–23 (MATPWRRALLMILASQVVTLVKC) is a signal peptide. Asparagine 47 is a glycosylation site (N-linked (GlcNAc...) asparagine).

It belongs to the UPF0669 family.

It localises to the secreted. Its function is as follows. May be involved in induction of apoptosis in CD4(+) T-cells, but not CD8(+) T-cells or hepatocytes. The chain is UPF0669 protein C6orf120 homolog from Mus musculus (Mouse).